The primary structure comprises 151 residues: Phosphoribosyl-AMP cyclohydrolase (151 aa).

Asp-94 contributes to the Mg(2+) binding site. Cys-95 serves as a coordination point for Zn(2+). Mg(2+) contacts are provided by Asp-96 and Asp-98. Zn(2+)-binding residues include Cys-112 and Cys-119.

Belongs to the PRA-CH family. Homodimer. Mg(2+) serves as cofactor. It depends on Zn(2+) as a cofactor.

It localises to the cytoplasm. The catalysed reaction is 1-(5-phospho-beta-D-ribosyl)-5'-AMP + H2O = 1-(5-phospho-beta-D-ribosyl)-5-[(5-phospho-beta-D-ribosylamino)methylideneamino]imidazole-4-carboxamide. It functions in the pathway amino-acid biosynthesis; L-histidine biosynthesis; L-histidine from 5-phospho-alpha-D-ribose 1-diphosphate: step 3/9. Functionally, catalyzes the hydrolysis of the adenine ring of phosphoribosyl-AMP. This chain is Phosphoribosyl-AMP cyclohydrolase, found in Rhodopseudomonas palustris (strain ATCC BAA-98 / CGA009).